Here is a 329-residue protein sequence, read N- to C-terminus: MGATGDVEQPRGPGGAERGGPELGDAGAAGQLVLTNPWNIMIKHRQVQRRGRRSQMTTSFTDPAISMDLLRAVLQPSINEEIQTVFNKYMKFFQKAALNVRDNVGEEVDAEQLIQEACRSCLEQAKLLFSDGEKVIPRLTHELPGIKRGRQAEEECALRGSPIPKKRKGRPPGHILANDRAATGMVWKPKSCEPIRREGPKWDPARLNESTTFVLGSRANKALGMGGTRGRIYIKHPHLFKYAADPQDKHWLAEQHHMRATGGKMAYLLIEEDIRDLAASDDYRGCLDLKLEELKSFVLPSWMVEKMRKYMETLRTENEHRAVEAPPQT.

The tract at residues 1-27 (MGATGDVEQPRGPGGAERGGPELGDAG) is disordered. The segment covering 12-22 (GPGGAERGGPE) has biased composition (gly residues). The segment at 56-147 (MTTSFTDPAI…RLTHELPGIK (92 aa)) is important for dimerization. The a.T hook DNA-binding region spans 159–173 (RGSPIPKKRKGRPPG). S161 is subject to Phosphoserine. Residues 164 to 170 (PKKRKGR) carry the Nuclear localization signal motif. The segment at 197 to 316 (REGPKWDPAR…MRKYMETLRT (120 aa)) is important for DNA and nucleosome binding. The H-T-H motif DNA-binding region spans 216–237 (GSRANKALGMGGTRGRIYIKHP).

Monomer and homodimer. A minor proportion may form homotrimers. Interacts with ZNF541. Interacts with the terminal deoxynucleotidyltransferase DNTT. Interacts with TRERF1. Identified in a histone deacetylase complex that contains DNTTIP1, HDAC1 and MIDEAS; this complex assembles into a tetramer that contains four copies of each protein chain. Component of a histone deacetylase complex containing DNTTIP1, ZNF541, HDAC1 and HDAC2. Identified in a complex with KCTD19, HDAC1, HDAC2 and ZNF541.

It is found in the nucleus. Functionally, increases DNTT terminal deoxynucleotidyltransferase activity (in vitro). Also acts as a transcriptional regulator, binding to the consensus sequence 5'-GNTGCATG-3' following an AT-tract. Associates with RAB20 promoter and positively regulates its transcription. Binds DNA and nucleosomes; may recruit HDAC1 complexes to nucleosomes or naked DNA. This Bos taurus (Bovine) protein is Deoxynucleotidyltransferase terminal-interacting protein 1 (DNTTIP1).